Reading from the N-terminus, the 475-residue chain is Methyltransferase-like protein 25B (475 aa).

Residues asparagine 185–histidine 210 adopt a coiled-coil conformation. A helical transmembrane segment spans residues valine 406–leucine 426.

It belongs to the METTL25 family.

The protein localises to the membrane. This is Methyltransferase-like protein 25B from Rattus norvegicus (Rat).